A 72-amino-acid chain; its full sequence is Probable transcription factor elt-4 (72 aa).

The segment at 16 to 40 adopts a GATA-type zinc-finger fold; the sequence is CSNCNGTNTTLWRRKAEGDPVCNAC.

It localises to the nucleus. In terms of biological role, probable transcription factor. Plays a role in regulating heme-dependent expression of heme transporter hrg-1. Modulates lifespan in a daf-16-dependent manner. The sequence is that of Probable transcription factor elt-4 from Caenorhabditis elegans.